We begin with the raw amino-acid sequence, 320 residues long: Cytochrome f (320 aa).

An N-terminal signal peptide occupies residues 1 to 35; the sequence is MQTRKTFSWIKEQITRSISASLMIYIITRTSISSA. 4 residues coordinate heme: Y36, C56, C59, and H60. The helical transmembrane segment at 286–306 threads the bilayer; sequence VQGLLFFLASVILAQIFLVLK.

This sequence belongs to the cytochrome f family. In terms of assembly, the 4 large subunits of the cytochrome b6-f complex are cytochrome b6, subunit IV (17 kDa polypeptide, petD), cytochrome f and the Rieske protein, while the 4 small subunits are PetG, PetL, PetM and PetN. The complex functions as a dimer. The cofactor is heme.

The protein localises to the plastid. The protein resides in the chloroplast thylakoid membrane. Component of the cytochrome b6-f complex, which mediates electron transfer between photosystem II (PSII) and photosystem I (PSI), cyclic electron flow around PSI, and state transitions. The protein is Cytochrome f of Panax ginseng (Korean ginseng).